We begin with the raw amino-acid sequence, 618 residues long: DNA mismatch repair protein MutL (618 aa).

Low complexity predominate over residues 367 to 378 (EPTAAREPATPR). The tract at residues 367 to 402 (EPTAAREPATPRYSGGASGGNGGRQTAGGWPHAQPG) is disordered. A compositionally biased stretch (gly residues) spans 382-392 (GASGGNGGRQT).

It belongs to the DNA mismatch repair MutL/HexB family.

Functionally, this protein is involved in the repair of mismatches in DNA. It is required for dam-dependent methyl-directed DNA mismatch repair. May act as a 'molecular matchmaker', a protein that promotes the formation of a stable complex between two or more DNA-binding proteins in an ATP-dependent manner without itself being part of a final effector complex. The sequence is that of DNA mismatch repair protein MutL from Salmonella choleraesuis (strain SC-B67).